Consider the following 223-residue polypeptide: Ubiquitin-conjugating enzyme E2 S-A (223 aa).

Positions 11 to 157 constitute a UBC core domain; the sequence is HIIRLVYKEV…ARLLTEIHGG (147 aa). The active-site Glycyl thioester intermediate is C95. The segment at 170 to 223 is disordered; the sequence is QDLASGASASSADPMIPGVLGGAEGPMAKKHAGERDKKLAAKKKLDKKRALRRL. Positions 209-223 are enriched in basic residues; that stretch reads AAKKKLDKKRALRRL.

The protein belongs to the ubiquitin-conjugating enzyme family.

It carries out the reaction S-ubiquitinyl-[E1 ubiquitin-activating enzyme]-L-cysteine + [E2 ubiquitin-conjugating enzyme]-L-cysteine = [E1 ubiquitin-activating enzyme]-L-cysteine + S-ubiquitinyl-[E2 ubiquitin-conjugating enzyme]-L-cysteine.. The protein operates within protein modification; protein ubiquitination. Catalyzes the covalent attachment of ubiquitin to other proteins. Acts as an essential factor of the anaphase promoting complex/cyclosome (APC/C), a cell cycle-regulated ubiquitin ligase that controls progression through mitosis. Acts by specifically elongating 'Lys-11'-linked polyubiquitin chains initiated by the E2 enzyme ube2c/ubch10 on APC/C substrates, enhancing the degradation of APC/C substrates by the proteasome and promoting mitotic exit. The protein is Ubiquitin-conjugating enzyme E2 S-A (ube2s-a) of Xenopus laevis (African clawed frog).